Consider the following 416-residue polypeptide: Multifunctional CCA protein (416 aa).

Gly8 and Arg11 together coordinate ATP. CTP is bound by residues Gly8 and Arg11. Mg(2+)-binding residues include Glu21 and Asp23. Positions 91, 137, and 140 each coordinate ATP. 3 residues coordinate CTP: Arg91, Arg137, and Arg140. Residues 228 to 329 (TGIHTLMVLK…LKLFDAVDAW (102 aa)) form the HD domain.

It belongs to the tRNA nucleotidyltransferase/poly(A) polymerase family. Bacterial CCA-adding enzyme type 1 subfamily. As to quaternary structure, monomer. Can also form homodimers and oligomers. It depends on Mg(2+) as a cofactor. Ni(2+) serves as cofactor.

It carries out the reaction a tRNA precursor + 2 CTP + ATP = a tRNA with a 3' CCA end + 3 diphosphate. The enzyme catalyses a tRNA with a 3' CCA end + 2 CTP + ATP = a tRNA with a 3' CCACCA end + 3 diphosphate. Catalyzes the addition and repair of the essential 3'-terminal CCA sequence in tRNAs without using a nucleic acid template. Adds these three nucleotides in the order of C, C, and A to the tRNA nucleotide-73, using CTP and ATP as substrates and producing inorganic pyrophosphate. tRNA 3'-terminal CCA addition is required both for tRNA processing and repair. Also involved in tRNA surveillance by mediating tandem CCA addition to generate a CCACCA at the 3' terminus of unstable tRNAs. While stable tRNAs receive only 3'-terminal CCA, unstable tRNAs are marked with CCACCA and rapidly degraded. The protein is Multifunctional CCA protein of Photorhabdus laumondii subsp. laumondii (strain DSM 15139 / CIP 105565 / TT01) (Photorhabdus luminescens subsp. laumondii).